The primary structure comprises 130 residues: Small ribosomal subunit protein uS11 (130 aa).

Belongs to the universal ribosomal protein uS11 family. Part of the 30S ribosomal subunit. Interacts with proteins S7 and S18. Binds to IF-3.

Its function is as follows. Located on the platform of the 30S subunit, it bridges several disparate RNA helices of the 16S rRNA. Forms part of the Shine-Dalgarno cleft in the 70S ribosome. This is Small ribosomal subunit protein uS11 from Caldicellulosiruptor bescii (strain ATCC BAA-1888 / DSM 6725 / KCTC 15123 / Z-1320) (Anaerocellum thermophilum).